Reading from the N-terminus, the 370-residue chain is Serine/threonine-protein kinase SAPK5 (370 aa).

A Protein kinase domain is found at 4 to 260 (YEPVREIGAG…MGEIKSHPWF (257 aa)). Residues 10–18 (IGAGNFGVA) and Lys33 contribute to the ATP site. The active-site Proton acceptor is Asp123. The tract at residues 312–370 (EAQTVPKPDKPVSGYGWGTDDDDDDQQPAEEEDEEDDYDRTVREVHASVDLDMSNLQIS) is disordered. Over residues 330 to 349 (TDDDDDDQQPAEEEDEEDDY) the composition is skewed to acidic residues. Basic and acidic residues predominate over residues 350–360 (DRTVREVHASV).

It belongs to the protein kinase superfamily. Ser/Thr protein kinase family. In terms of processing, may be phosphorylated. In terms of tissue distribution, expressed in leaf blades, leaf sheaths and roots. Expressed in shoots and roots of young seedlings.

The protein resides in the cytoplasm. It localises to the nucleus. It carries out the reaction L-seryl-[protein] + ATP = O-phospho-L-seryl-[protein] + ADP + H(+). The enzyme catalyses L-threonyl-[protein] + ATP = O-phospho-L-threonyl-[protein] + ADP + H(+). With respect to regulation, activated by hyperosmotic stress. Its function is as follows. May play a role in signal transduction of hyperosmotic response. In Oryza sativa subsp. japonica (Rice), this protein is Serine/threonine-protein kinase SAPK5 (SAPK5).